A 196-amino-acid polypeptide reads, in one-letter code: Cell division protein SepF (196 aa).

The interval 15–80 is disordered; the sequence is VEDDEEFNEP…PKRSASTFSK (66 aa). Positions 56–79 are enriched in polar residues; sequence RPAQSTPKPQAQTAAPKRSASTFS.

It belongs to the SepF family. Homodimer. Interacts with FtsZ.

The protein resides in the cytoplasm. In terms of biological role, cell division protein that is part of the divisome complex and is recruited early to the Z-ring. Probably stimulates Z-ring formation, perhaps through the cross-linking of FtsZ protofilaments. Its function overlaps with FtsA. This Lactococcus lactis subsp. cremoris (strain SK11) protein is Cell division protein SepF.